The following is a 429-amino-acid chain: Histidine--tRNA ligase (429 aa).

It belongs to the class-II aminoacyl-tRNA synthetase family. As to quaternary structure, homodimer.

The protein resides in the cytoplasm. It catalyses the reaction tRNA(His) + L-histidine + ATP = L-histidyl-tRNA(His) + AMP + diphosphate + H(+). This is Histidine--tRNA ligase from Corynebacterium efficiens (strain DSM 44549 / YS-314 / AJ 12310 / JCM 11189 / NBRC 100395).